Consider the following 193-residue polypeptide: Ribosomal RNA small subunit methyltransferase G (193 aa).

S-adenosyl-L-methionine is bound by residues G61, L66, 112-113, and R126; that span reads IE.

It belongs to the methyltransferase superfamily. RNA methyltransferase RsmG family.

The protein localises to the cytoplasm. The enzyme catalyses guanosine(527) in 16S rRNA + S-adenosyl-L-methionine = N(7)-methylguanosine(527) in 16S rRNA + S-adenosyl-L-homocysteine. Functionally, specifically methylates the N7 position of guanine in position 527 of 16S rRNA. The sequence is that of Ribosomal RNA small subunit methyltransferase G from Paracoccus denitrificans (strain Pd 1222).